Reading from the N-terminus, the 553-residue chain is CTP synthase (553 aa).

Residues 1–266 (MKYIFVTGGV…GKAVEDLLGL (266 aa)) are amidoligase domain. Ser12 contributes to the CTP binding site. UTP is bound at residue Ser12. Position 13–18 (13–18 (SLGKGV)) interacts with ATP. Position 53 (Tyr53) interacts with L-glutamine. Asp70 is an ATP binding site. Residues Asp70 and Glu140 each coordinate Mg(2+). CTP contacts are provided by residues 147–149 (DIE), 187–192 (KTKPTQ), and Lys223. Residues 187-192 (KTKPTQ) and Lys223 contribute to the UTP site. The Glutamine amidotransferase type-1 domain maps to 291-541 (TIAIAGKYTE…VAAALQSGPS (251 aa)). Gly353 contacts L-glutamine. Residue Cys380 is the Nucleophile; for glutamine hydrolysis of the active site. Residues 381 to 384 (LGMQ), Glu404, and Arg464 each bind L-glutamine. Residues His514 and Glu516 contribute to the active site.

It belongs to the CTP synthase family. Homotetramer.

It catalyses the reaction UTP + L-glutamine + ATP + H2O = CTP + L-glutamate + ADP + phosphate + 2 H(+). The enzyme catalyses L-glutamine + H2O = L-glutamate + NH4(+). It carries out the reaction UTP + NH4(+) + ATP = CTP + ADP + phosphate + 2 H(+). Its pathway is pyrimidine metabolism; CTP biosynthesis via de novo pathway; CTP from UDP: step 2/2. Allosterically activated by GTP, when glutamine is the substrate; GTP has no effect on the reaction when ammonia is the substrate. The allosteric effector GTP functions by stabilizing the protein conformation that binds the tetrahedral intermediate(s) formed during glutamine hydrolysis. Inhibited by the product CTP, via allosteric rather than competitive inhibition. Its function is as follows. Catalyzes the ATP-dependent amination of UTP to CTP with either L-glutamine or ammonia as the source of nitrogen. Regulates intracellular CTP levels through interactions with the four ribonucleotide triphosphates. The protein is CTP synthase of Deinococcus geothermalis (strain DSM 11300 / CIP 105573 / AG-3a).